The primary structure comprises 743 residues: Adhesion defective protein 2 (743 aa).

Residues 1 to 36 are disordered; sequence MADPGLRSGVGLPSQQGQKHDLQKDQKQPHVNNADR. A compositionally biased stretch (basic and acidic residues) spans 18–28; sequence QKHDLQKDQKQ. The LisH domain occupies 38-70; it reads TQSLLNSYIYDYLIKKDYCEAARAFGREAQVQT. 4 disordered regions span residues 79–127, 264–361, 379–426, and 476–692; these read NSLA…PPPP, LQSV…QYPV, RNPH…YGFS, and KERK…KSSD. Residue Ser-89 is modified to Phosphoserine. Positions 98–114 are enriched in polar residues; sequence ISNNESSDENMNVNNGN. The span at 264-281 shows a compositional bias: low complexity; that stretch reads LQSVQQQQKQHQQKKTPQ. 5 stretches are compositionally biased toward polar residues: residues 282 to 297, 315 to 353, 390 to 399, 408 to 426, and 482 to 500; these read SGST…QPTT, IPSS…DTTG, PSSTLPQQQK, QQPS…YGFS, and TSAS…SSVA. A compositionally biased stretch (low complexity) spans 501 to 520; it reads KTKSTTPKSTDTPTEATTSP. Polar residues-rich tracts occupy residues 521 to 544 and 556 to 566; these read VKVS…NMPM and DHPSNYSNLIE. Low complexity predominate over residues 567-578; it reads NSSTSDTNNADN. A compositionally biased stretch (polar residues) spans 586–602; the sequence is WQLQQTHSSRPTPNASS. The segment covering 612–631 has biased composition (low complexity); it reads PSSANSNAPTPAPTVNTTNP. Polar residues predominate over residues 661–670; the sequence is DNQNQSGKSN. Positions 671-688 are enriched in low complexity; it reads PDTSATPSAPTESTTVAT.

It belongs to the FLO8 family.

It localises to the cytoplasm. The protein resides in the nucleus. Its function is as follows. Probable transcriptional regulator involved in cell adhesion. The protein is Adhesion defective protein 2 (adn2) of Schizosaccharomyces pombe (strain 972 / ATCC 24843) (Fission yeast).